We begin with the raw amino-acid sequence, 87 residues long: Protein E7 (87 aa).

Positions 1–38 (MHGPHPTVKDIELSLAPEDVPVQCNVQLDEEDYTNVEE) are E7 terminal domain. A zinc finger lies at 50-86 (CPKCSSPLRLVVECSHADIRALEQLLLGTLTVVCPRC). The Nuclear export signal signature appears at 68–76 (IRALEQLLL).

This sequence belongs to the papillomaviridae E7 protein family. As to quaternary structure, homodimer. Homooligomer. Interacts with host RB1; this interaction induces dissociation of RB1-E2F1 complex thereby disrupting RB1 activity. Interacts with host EP300; this interaction represses EP300 transcriptional activity. Interacts with protein E2; this interaction inhibits E7 oncogenic activity. Interacts with host TMEM173/STING; this interaction impairs the ability of TMEM173/STING to sense cytosolic DNA and promote the production of type I interferon (IFN-alpha and IFN-beta). Post-translationally, highly phosphorylated.

The protein resides in the host cytoplasm. The protein localises to the host nucleus. Plays a role in viral genome replication by driving entry of quiescent cells into the cell cycle. Stimulation of progression from G1 to S phase allows the virus to efficiently use the cellular DNA replicating machinery to achieve viral genome replication. E7 protein has both transforming and trans-activating activities. Induces the disassembly of the E2F1 transcription factor from RB1, with subsequent transcriptional activation of E2F1-regulated S-phase genes. Interferes with host histone deacetylation mediated by HDAC1 and HDAC2, leading to transcription activation. Also plays a role in the inhibition of both antiviral and antiproliferative functions of host interferon alpha. Interaction with host TMEM173/STING impairs the ability of TMEM173/STING to sense cytosolic DNA and promote the production of type I interferon (IFN-alpha and IFN-beta). This chain is Protein E7, found in Human papillomavirus 28.